Here is a 432-residue protein sequence, read N- to C-terminus: D-amino acid dehydrogenase (432 aa).

Residue 3 to 17 (VVILGSGVVGVASAW) coordinates FAD.

Belongs to the DadA oxidoreductase family. It depends on FAD as a cofactor.

The catalysed reaction is a D-alpha-amino acid + A + H2O = a 2-oxocarboxylate + AH2 + NH4(+). The protein operates within amino-acid degradation; D-alanine degradation; NH(3) and pyruvate from D-alanine: step 1/1. Its function is as follows. Oxidative deamination of D-amino acids. The sequence is that of D-amino acid dehydrogenase from Shigella boydii serotype 4 (strain Sb227).